The chain runs to 255 residues: Cathepsin G (255 aa).

The first 18 residues, 1–18, serve as a signal peptide directing secretion; sequence MQPLLLLLAFLLPTGAEA. A propeptide spans 19–20 (activation peptide); that stretch reads GE. The segment at 21–25 is important for antimicrobial activity; it reads IIGGR. In terms of domain architecture, Peptidase S1 spans 21 to 243; sequence IIGGRESRPH…FLPWIRTTMR (223 aa). An intrachain disulfide couples Cys49 to Cys65. His64 (charge relay system) is an active-site residue. An N-linked (GlcNAc...) (complex) asparagine; alternate glycan is attached at Asn71. N-linked (GlcNAc...) (paucimannose) asparagine; alternate glycosylation occurs at Asn71. Residues 97–111 form an important for antimicrobial activity region; sequence HPQYNQRTIQNDIML. Residue Asp108 is the Charge relay system of the active site. 2 disulfide bridges follow: Cys142/Cys207 and Cys172/Cys186. Ser201 acts as the Charge relay system in catalysis. A propeptide spanning residues 245-255 is cleaved from the precursor; that stretch reads FKLLDQMETPL.

The protein belongs to the peptidase S1 family. As to quaternary structure, (Microbial infection) Interacts with CASP4; the interaction is promoted by the Td92 surface protein of the periodontal pathogen T.denticola and leads to CASP4 activation. In terms of assembly, (Microbial infection) Interacts with M.tuberculosis protein Rv3364c. (Microbial infection) Interacts with S.aureus EapH1; EapH1 acts as a reversible inhibitor of CATG activity. In terms of processing, two C-terminal truncation variants have been identified, one which ends at Arg-243 and one which ends at Ser-244. In terms of tissue distribution, expressed in neutrophils (at protein level). Expressed in B cells.

Its subcellular location is the cell membrane. It localises to the cytoplasmic granule. It is found in the secreted. The protein resides in the cytoplasm. The protein localises to the cytosol. Its subcellular location is the lysosome. It localises to the nucleus. It carries out the reaction Specificity similar to chymotrypsin C.. Its activity is regulated as follows. Inhibited by soybean trypsin inhibitor, benzamidine, the synthetic peptide R13K, Z-Gly-Leu-Phe-CH2Cl, phenylmethylsulfonyl fluoride, 3,4-dichloroisocoumarin, DFP, SBTI and alpha-1-antitrypsin. Inhibited by LPS from P.aeruginosa but not by LPS from S.minnesota. Not inhibited by elastinal, CMK, TLCK, ETDA or leupeptin. With respect to regulation, (Microbial infection) Inhibited reversibly by S.aureus EapH1. (Microbial infection) Activity is induced by the Td92 surface protein of the periodontal pathogen T.denticola. In terms of biological role, serine protease with trypsin- and chymotrypsin-like specificity. Also displays antibacterial activity against Gram-negative and Gram-positive bacteria independent of its protease activity. Prefers Phe and Tyr residues in the P1 position of substrates but also cleaves efficiently after Trp and Leu. Shows a preference for negatively charged amino acids in the P2' position and for aliphatic amino acids both upstream and downstream of the cleavage site. Required for recruitment and activation of platelets which is mediated by the F2RL3/PAR4 platelet receptor. Binds reversibly to and stimulates B cells and CD4(+) and CD8(+) T cells. Also binds reversibly to natural killer (NK) cells and enhances NK cell cytotoxicity through its protease activity. Cleaves complement C3. Cleaves vimentin. Cleaves thrombin receptor F2R/PAR1 and acts as either an agonist or an inhibitor, depending on the F2R cleavage site. Cleavage of F2R at '41-Arg-|-Ser-42' results in receptor activation while cleavage at '55-Phe-|-Trp-56' results in inhibition of receptor activation. Cleaves the synovial mucin-type protein PRG4/lubricin. Cleaves and activates IL36G which promotes expression of chemokines CXCL1 and CXLC8 in keratinocytes. Cleaves IL33 into mature forms which have greater activity than the unprocessed form. Cleaves coagulation factor F8 to produce a partially activated form. Also cleaves and activates coagulation factor F10. Cleaves leukocyte cell surface protein SPN/CD43 to release its extracellular domain and trigger its intramembrane proteolysis by gamma-secretase, releasing the CD43 cytoplasmic tail chain (CD43-ct) which translocates to the nucleus. Cleaves CCL5/RANTES to produce RANTES(4-68) lacking the N-terminal three amino acids which exhibits reduced chemotactic and antiviral activities. During apoptosis, cleaves SMARCA2/BRM to produce a 160 kDa cleavage product which localizes to the cytosol. Cleaves myelin basic protein MBP in B cell lysosomes at '224-Phe-|-Lys-225' and '248-Phe-|-Ser-249', degrading the major immunogenic MBP epitope and preventing the activation of MBP-specific autoreactive T cells. Cleaves annexin ANXA1 and antimicrobial peptide CAMP to produce peptides which act on neutrophil N-formyl peptide receptors to enhance the release of CXCL2. Acts as a ligand for the N-formyl peptide receptor FPR1, enhancing phagocyte chemotaxis. Has antibacterial activity against the Gram-negative bacteria N.gonorrhoeae and P.aeruginosa. Likely to act against N.gonorrhoeae by interacting with N.gonorrhoeae penA/PBP2. Exhibits potent antimicrobial activity against the Gram-positive bacterium L.monocytogenes. Has antibacterial activity against the Gram-positive bacterium S.aureus and degrades S.aureus biofilms, allowing polymorphonuclear leukocytes to penetrate the biofilm and phagocytose bacteria. Has antibacterial activity against M.tuberculosis. Mediates CASP4 activation induced by the Td92 surface protein of the periodontal pathogen T.denticola, causing production and secretion of IL1A and leading to pyroptosis of gingival fibroblasts. Induces platelet aggregation which is strongly potentiated in the presence of ELANE. The protein is Cathepsin G (CTSG) of Homo sapiens (Human).